We begin with the raw amino-acid sequence, 650 residues long: Aminopeptidase B (650 aa).

Residue Ala-2 is modified to N-acetylalanine. At Ser-7 the chain carries Phosphoserine. 298–302 (GGMEN) provides a ligand contact to substrate. A Zn(2+)-binding site is contributed by His-325. The active-site Proton acceptor is the Glu-326. Zn(2+) contacts are provided by His-329 and Glu-348. Residue Lys-446 is modified to N6-acetyllysine.

The protein belongs to the peptidase M1 family. Requires Zn(2+) as cofactor.

It localises to the secreted. The catalysed reaction is Release of N-terminal Arg and Lys from oligopeptides when P1' is not Pro. Also acts on arylamides of Arg and Lys.. Its function is as follows. Exopeptidase which selectively removes arginine and/or lysine residues from the N-terminus of several peptide substrates including Arg(0)-Leu-enkephalin, Arg(0)-Met-enkephalin and Arg(-1)-Lys(0)-somatostatin-14. Can hydrolyze leukotriene A4 (LTA-4) into leukotriene B4 (LTB-4). This chain is Aminopeptidase B (RNPEP), found in Homo sapiens (Human).